We begin with the raw amino-acid sequence, 361 residues long: Phenylalanine--tRNA ligase alpha subunit (361 aa).

Residue Glu-260 participates in Mg(2+) binding.

Belongs to the class-II aminoacyl-tRNA synthetase family. Phe-tRNA synthetase alpha subunit type 1 subfamily. In terms of assembly, tetramer of two alpha and two beta subunits. Mg(2+) is required as a cofactor.

It localises to the cytoplasm. The catalysed reaction is tRNA(Phe) + L-phenylalanine + ATP = L-phenylalanyl-tRNA(Phe) + AMP + diphosphate + H(+). In Allorhizobium ampelinum (strain ATCC BAA-846 / DSM 112012 / S4) (Agrobacterium vitis (strain S4)), this protein is Phenylalanine--tRNA ligase alpha subunit.